Here is a 115-residue protein sequence, read N- to C-terminus: ComG operon protein 5 (115 aa).

Residues 1 to 7 constitute a propeptide, leader sequence; sequence MWRENKG. Phe-8 carries the N-methylphenylalanine modification. A helical membrane pass occupies residues 13 to 31; sequence TMSALSLWLFVLLTVVPLW.

Post-translationally, processing of ComGE in competent cells requires ComC.

Its subcellular location is the cell membrane. It localises to the cell surface. Functionally, required for transformation and DNA binding. In Bacillus subtilis (strain 168), this protein is ComG operon protein 5 (comGE).